We begin with the raw amino-acid sequence, 236 residues long: Adenylate dimethylallyltransferase (236 aa).

It belongs to the isopentenyl transferase family.

It catalyses the reaction dimethylallyl diphosphate + AMP = N(6)-(dimethylallyl)adenosine 5'-phosphate + diphosphate. In terms of biological role, transfers dimethylallyl groups to AMP as part of the biosynthesis of cytokinin phytohormones. This is Adenylate dimethylallyltransferase (ipt) from Pantoea agglomerans pv. gypsophilae (Erwinia herbicola).